Consider the following 147-residue polypeptide: uncharacterized protein (147 aa).

Helical transmembrane passes span Y4–G26 and Y123–F145.

The protein resides in the cell membrane. This is an uncharacterized protein from Treponema pallidum (strain Nichols).